We begin with the raw amino-acid sequence, 1240 residues long: DNA polymerase II large subunit (1240 aa).

Belongs to the archaeal DNA polymerase II family. Heterodimer of a large subunit and a small subunit.

It carries out the reaction DNA(n) + a 2'-deoxyribonucleoside 5'-triphosphate = DNA(n+1) + diphosphate. The catalysed reaction is Exonucleolytic cleavage in the 3'- to 5'-direction to yield nucleoside 5'-phosphates.. In terms of biological role, possesses two activities: a DNA synthesis (polymerase) and an exonucleolytic activity that degrades single-stranded DNA in the 3'- to 5'-direction. Has a template-primer preference which is characteristic of a replicative DNA polymerase. The sequence is that of DNA polymerase II large subunit from Methanopyrus kandleri (strain AV19 / DSM 6324 / JCM 9639 / NBRC 100938).